We begin with the raw amino-acid sequence, 156 residues long: Cyclic pyranopterin monophosphate synthase (156 aa).

Substrate is bound by residues 75 to 77 and 111 to 112; these read LCH and ME. Residue D126 is part of the active site.

Belongs to the MoaC family. As to quaternary structure, homohexamer; trimer of dimers.

The catalysed reaction is (8S)-3',8-cyclo-7,8-dihydroguanosine 5'-triphosphate = cyclic pyranopterin phosphate + diphosphate. The protein operates within cofactor biosynthesis; molybdopterin biosynthesis. Functionally, catalyzes the conversion of (8S)-3',8-cyclo-7,8-dihydroguanosine 5'-triphosphate to cyclic pyranopterin monophosphate (cPMP). The protein is Cyclic pyranopterin monophosphate synthase of Caulobacter sp. (strain K31).